Consider the following 170-residue polypeptide: Lipoprotein signal peptidase (170 aa).

3 helical membrane-spanning segments follow: residues 5 to 25 (IVGV…KAYA), 62 to 82 (SNLI…VLFV), and 89 to 111 (STIC…LRFG). Residues Asp115 and Asp133 contribute to the active site. Residues 126 to 146 (WPAFNFADVCVTCGVICFLCL) form a helical membrane-spanning segment.

Belongs to the peptidase A8 family.

It is found in the cell inner membrane. It carries out the reaction Release of signal peptides from bacterial membrane prolipoproteins. Hydrolyzes -Xaa-Yaa-Zaa-|-(S,diacylglyceryl)Cys-, in which Xaa is hydrophobic (preferably Leu), and Yaa (Ala or Ser) and Zaa (Gly or Ala) have small, neutral side chains.. Its pathway is protein modification; lipoprotein biosynthesis (signal peptide cleavage). In terms of biological role, this protein specifically catalyzes the removal of signal peptides from prolipoproteins. The chain is Lipoprotein signal peptidase from Anaplasma marginale (strain Florida).